The sequence spans 106 residues: Transcriptional and immune response regulator (106 aa).

In terms of assembly, monomer. Interacts with NOTCH2 (via ANK repeats), the interaction inhibits the nuclear translocation of NOTCH2 N2ICD. Interacts (C-terminus) with CBY1 (C-terminus), TCIM competes with CTNNB1 for the interaction with CBY1.

The protein localises to the cytoplasm. It is found in the nucleus. The protein resides in the nucleolus. It localises to the nucleus speckle. Functionally, seems to be involved in the regulation of cell growth an differentiation, may play different and opposite roles depending on the tissue or cell type. May enhance the WNT-CTNNB1 pathway by relieving antagonistic activity of CBY1. Enhances the proliferation of follicular dendritic cells. Plays a role in the mitogen-activated MAPK2/3 signaling pathway, positively regulates G1-to-S-phase transition of the cell cycle. In endothelial cells, enhances key inflammatory mediators and inflammatory response through the modulation of NF-kappaB transcriptional regulatory activity. Involved in the regulation of heat shock response, seems to play a positive feedback with HSF1 to modulate heat-shock downstream gene expression. Plays a role in the regulation of hematopoiesis even if the mechanisms are unknown. In cancers such as thyroid or lung cancer, it has been described as promoter of cell proliferation, G1-to-S-phase transition and inhibitor of apoptosis. However, it negatively regulates self-renewal of liver cancer cells via suppresion of NOTCH2 signaling. The polypeptide is Transcriptional and immune response regulator (TCIM) (Bos taurus (Bovine)).